We begin with the raw amino-acid sequence, 139 residues long: NADH-quinone oxidoreductase subunit A (139 aa).

Transmembrane regions (helical) follow at residues 16–36 (GLFI…ASLL), 69–89 (LVAM…AWAV), and 94–114 (VGWE…AGLV).

The protein belongs to the complex I subunit 3 family. As to quaternary structure, NDH-1 is composed of 14 different subunits. Subunits NuoA, H, J, K, L, M, N constitute the membrane sector of the complex.

Its subcellular location is the cell inner membrane. The enzyme catalyses a quinone + NADH + 5 H(+)(in) = a quinol + NAD(+) + 4 H(+)(out). NDH-1 shuttles electrons from NADH, via FMN and iron-sulfur (Fe-S) centers, to quinones in the respiratory chain. The immediate electron acceptor for the enzyme in this species is believed to be ubiquinone. Couples the redox reaction to proton translocation (for every two electrons transferred, four hydrogen ions are translocated across the cytoplasmic membrane), and thus conserves the redox energy in a proton gradient. The chain is NADH-quinone oxidoreductase subunit A from Chromohalobacter salexigens (strain ATCC BAA-138 / DSM 3043 / CIP 106854 / NCIMB 13768 / 1H11).